The chain runs to 100 residues: UPF0213 protein CKO_04549 (100 aa).

A GIY-YIG domain is found at Thr2–Arg77.

The protein belongs to the UPF0213 family.

This chain is UPF0213 protein CKO_04549, found in Citrobacter koseri (strain ATCC BAA-895 / CDC 4225-83 / SGSC4696).